The chain runs to 523 residues: DNA primase (523 aa).

Residues cysteine 37–cysteine 61 form a CHC2-type zinc finger. The 82-residue stretch at lysine 259 to glycine 340 folds into the Toprim domain. Positions 265, 309, and 311 each coordinate Mg(2+).

It belongs to the DnaG primase family. In terms of assembly, monomer. Interacts with DnaB. Zn(2+) serves as cofactor. Requires Mg(2+) as cofactor.

The catalysed reaction is ssDNA + n NTP = ssDNA/pppN(pN)n-1 hybrid + (n-1) diphosphate.. Functionally, RNA polymerase that catalyzes the synthesis of short RNA molecules used as primers for DNA polymerase during DNA replication. The sequence is that of DNA primase from Borreliella burgdorferi (strain ATCC 35210 / DSM 4680 / CIP 102532 / B31) (Borrelia burgdorferi).